The sequence spans 513 residues: Interferon-induced, double-stranded RNA-activated protein kinase (513 aa).

A2 bears the N-acetylalanine mark. The DRBM 1 domain maps to 8–76 (FYVDKLNKYS…AKLAVEILDN (69 aa)). A Glycyl lysine isopeptide (Lys-Gly) (interchain with G-Cter in ISG15) cross-link involves residue K68. S82 carries the post-translational modification Phosphoserine. At T84 the chain carries Phosphothreonine. The 68-residue stretch at 95 to 162 (NYIGLVNSFA…AKNAYQKLSE (68 aa)) folds into the DRBM 2 domain. Y96 is subject to Phosphotyrosine; by autocatalysis. A Glycyl lysine isopeptide (Lys-Gly) (interchain with G-Cter in ISG15) cross-link involves residue K154. At Y157 the chain carries Phosphotyrosine; by autocatalysis. The residue at position 227 (T227) is a Phosphothreonine. Residues 235–513 (DFEDIEEIGS…ISEKKKRNTC (279 aa)) form an interaction with TRAF5 region. The Protein kinase domain maps to 236–502 (FEDIEEIGSG…EILKTLAEWK (267 aa)). 242-250 (IGSGGFGQV) provides a ligand contact to ATP. The residue at position 262 (Y262) is a Phosphotyrosine; by autocatalysis. K265 provides a ligand contact to ATP. The Proton acceptor role is filled by D373. Phosphothreonine; by autocatalysis occurs at positions 406 and 411. S416 carries the post-translational modification Phosphoserine.

It belongs to the protein kinase superfamily. Ser/Thr protein kinase family. GCN2 subfamily. As to quaternary structure, homodimer. Interacts with DNAJC3. Interacts with STRBP. Forms a complex with FANCA, FANCC, FANCG and HSP70. Interacts with ADAR/ADAR1. The inactive form interacts with NCK1 and GSN. Interacts (via the kinase catalytic domain) with STAT3 (via SH2 domain), TRAF2 (C-terminus), TRAF5 (C-terminus) and TRAF6 (C-terminus). Interacts with MAP2K6, IKBKB/IKKB, IRS1, NPM1, TARBP2, NLRP1, NLRP3, NLRC4 and AIM2. Interacts (via DRBM 1 domain) with DUS2L (via DRBM domain). Interacts with DHX9 (via N-terminus) and this interaction is dependent upon activation of the kinase. Post-translationally, autophosphorylated on several Ser, Thr and Tyr residues. Autophosphorylation of Thr-411 is dependent on Thr-406 and is stimulated by dsRNA binding and dimerization. Autophosphorylation apparently leads to the activation of the kinase. Tyrosine autophosphorylation is essential for efficient dsRNA-binding, dimerization, and kinase activation.

Its subcellular location is the cytoplasm. The protein resides in the nucleus. The protein localises to the perinuclear region. The enzyme catalyses L-seryl-[protein] + ATP = O-phospho-L-seryl-[protein] + ADP + H(+). The catalysed reaction is L-threonyl-[protein] + ATP = O-phospho-L-threonyl-[protein] + ADP + H(+). It catalyses the reaction L-tyrosyl-[protein] + ATP = O-phospho-L-tyrosyl-[protein] + ADP + H(+). Its activity is regulated as follows. Initially produced in an inactive form and is activated by binding to viral dsRNA, which causes dimerization and autophosphorylation in the activation loop and stimulation of function. ISGylation can activate it in the absence of viral infection. Can also be activated by heparin, pro-inflammatory stimuli, growth factors, cytokines, oxidative stress and the cellular protein PRKRA. Activity is markedly stimulated by manganese ions. Activation is blocked by the cellular proteins TARBP2, DUS2L, NPM1, NCK1 and ADAR. In terms of biological role, IFN-induced dsRNA-dependent serine/threonine-protein kinase that phosphorylates the alpha subunit of eukaryotic translation initiation factor 2 (EIF2S1/eIF-2-alpha) and plays a key role in the innate immune response to viral infection. Inhibits viral replication via the integrated stress response (ISR): EIF2S1/eIF-2-alpha phosphorylation in response to viral infection converts EIF2S1/eIF-2-alpha in a global protein synthesis inhibitor, resulting to a shutdown of cellular and viral protein synthesis, while concomitantly initiating the preferential translation of ISR-specific mRNAs, such as the transcriptional activator ATF4. Exerts its antiviral activity on a wide range of DNA and RNA viruses. Also involved in the regulation of signal transduction, apoptosis, cell proliferation and differentiation: phosphorylates other substrates including p53/TP53, PPP2R5A, DHX9, ILF3 and IRS1. In addition to serine/threonine-protein kinase activity, also has tyrosine-protein kinase activity and phosphorylates CDK1 at 'Tyr-4' upon DNA damage, facilitating its ubiquitination and proteasomal degradation. Either as an adapter protein and/or via its kinase activity, can regulate various signaling pathways (p38 MAP kinase, NF-kappa-B and insulin signaling pathways) and transcription factors (JUN, STAT1, STAT3, IRF1, ATF3) involved in the expression of genes encoding pro-inflammatory cytokines and IFNs. Activates the NF-kappa-B pathway via interaction with IKBKB and TRAF family of proteins and activates the p38 MAP kinase pathway via interaction with MAP2K6. Can act as both a positive and negative regulator of the insulin signaling pathway (ISP). Negatively regulates ISP by inducing the inhibitory phosphorylation of insulin receptor substrate 1 (IRS1) at 'Ser-312' and positively regulates ISP via phosphorylation of PPP2R5A which activates FOXO1, which in turn up-regulates the expression of insulin receptor substrate 2 (IRS2). Can regulate NLRP3 inflammasome assembly and the activation of NLRP3, NLRP1, AIM2 and NLRC4 inflammasomes. Plays a role in the regulation of the cytoskeleton by binding to gelsolin (GSN), sequestering the protein in an inactive conformation away from actin. The protein is Interferon-induced, double-stranded RNA-activated protein kinase (Eif2ak2) of Rattus norvegicus (Rat).